The primary structure comprises 442 residues: Elongation factor 1-alpha 1 (442 aa).

Residues Lys-5 to Lys-227 enclose the tr-type G domain. The tract at residues Gly-14–Ser-21 is G1. Gly-14–Ser-21 contacts GTP. The tract at residues Gly-70–Asp-74 is G2. The interval Asp-91 to Gly-94 is G3. GTP-binding positions include Asp-91–His-95 and Asn-153–Asp-156. The interval Asn-153–Asp-156 is G4. The interval Ser-194 to Phe-196 is G5.

Belongs to the TRAFAC class translation factor GTPase superfamily. Classic translation factor GTPase family. EF-Tu/EF-1A subfamily.

The protein localises to the cytoplasm. In terms of biological role, this protein promotes the GTP-dependent binding of aminoacyl-tRNA to the A-site of ribosomes during protein biosynthesis. This chain is Elongation factor 1-alpha 1 (EFA1), found in Euplotes crassus.